The following is a 223-amino-acid chain: Deoxyribose-phosphate aldolase (223 aa).

The active-site Proton donor/acceptor is the Asp91. Lys153 (schiff-base intermediate with acetaldehyde) is an active-site residue. The active-site Proton donor/acceptor is the Lys182.

It belongs to the DeoC/FbaB aldolase family. DeoC type 1 subfamily.

It is found in the cytoplasm. The catalysed reaction is 2-deoxy-D-ribose 5-phosphate = D-glyceraldehyde 3-phosphate + acetaldehyde. The protein operates within carbohydrate degradation; 2-deoxy-D-ribose 1-phosphate degradation; D-glyceraldehyde 3-phosphate and acetaldehyde from 2-deoxy-alpha-D-ribose 1-phosphate: step 2/2. In terms of biological role, catalyzes a reversible aldol reaction between acetaldehyde and D-glyceraldehyde 3-phosphate to generate 2-deoxy-D-ribose 5-phosphate. The sequence is that of Deoxyribose-phosphate aldolase from Yersinia enterocolitica serotype O:8 / biotype 1B (strain NCTC 13174 / 8081).